The following is a 63-amino-acid chain: Translational regulator CsrA (63 aa).

Belongs to the CsrA/RsmA family. As to quaternary structure, homodimer; the beta-strands of each monomer intercalate to form a hydrophobic core, while the alpha-helices form wings that extend away from the core.

Its subcellular location is the cytoplasm. Functionally, a key translational regulator that binds mRNA to regulate translation initiation and/or mRNA stability. Mediates global changes in gene expression, shifting from rapid growth to stress survival by linking envelope stress, the stringent response and the catabolite repression systems. Usually binds in the 5'-UTR; binding at or near the Shine-Dalgarno sequence prevents ribosome-binding, repressing translation, binding elsewhere in the 5'-UTR can activate translation and/or stabilize the mRNA. Its function is antagonized by small RNA(s). In Haemophilus influenzae (strain PittEE), this protein is Translational regulator CsrA.